A 1616-amino-acid chain; its full sequence is Replicase large subunit (1616 aa).

The tract at residues Phe-50 to His-458 is methyltransferase. An Alphavirus-like MT domain is found at Thr-72 to Val-281. The 163-residue stretch at Val-801–Arg-963 folds into the (+)RNA virus helicase ATP-binding domain. Positions Leu-830–Thr-1085 are helicase. Gly-833–Thr-840 contributes to the ATP binding site. Positions Arg-964–Gln-1116 constitute a (+)RNA virus helicase C-terminal domain. In terms of domain architecture, RdRp catalytic spans Met-1380 to Asp-1493.

The protein belongs to the ssRNA positive-strand viruses RNA-directed RNA polymerase family. In terms of assembly, heterodimer of a large and a small subunit.

The enzyme catalyses RNA(n) + a ribonucleoside 5'-triphosphate = RNA(n+1) + diphosphate. The catalysed reaction is ATP + H2O = ADP + phosphate + H(+). Its function is as follows. Is an RNA-dependent RNA polymerase active in viral RNA replication. In terms of biological role, is a methyltransferase active in RNA capping and an RNA helicase. Methyltransferase displays a cytoplasmic capping enzyme activity. This function is necessary since all viral RNAs are synthesized in the cytoplasm, and host capping enzymes are restricted to the nucleus. Helicase region probably exhibits NTPase and RNA unwinding activities (Potential). It also acts as a suppressor of RNA-mediated gene silencing, also known as post-transcriptional gene silencing (PTGS), a mechanism of plant viral defense that limits the accumulation of viral RNAs. May mediate silencing suppression through either inhibition of HEN1-mediated siRNA or siRNA demethylation. The sequence is that of Replicase large subunit from Antirrhinum majus (Garden snapdragon).